The sequence spans 176 residues: Centromere protein R (176 aa).

Lysine 8 participates in a covalent cross-link: Glycyl lysine isopeptide (Lys-Gly) (interchain with G-Cter in SUMO2). A Phosphoserine modification is found at serine 17. Residues 20–50 form a DD1 region; the sequence is PSKIVRKKSITAYSPTTGTYQLSPFSSPATP. Lysine 22 is covalently cross-linked (Glycyl lysine isopeptide (Lys-Gly) (interchain with G-Cter in SUMO2)). Position 28 is a phosphoserine (serine 28). Residues 34–48 are compositionally biased toward polar residues; it reads PTTGTYQLSPFSSPA. Positions 34 to 78 are disordered; the sequence is PTTGTYQLSPFSSPATPKEQEHRNGPSNETRKRSNLSSPVRQEST. A compositionally biased stretch (basic and acidic residues) spans 51-65; sequence KEQEHRNGPSNETRK. A Nuclear localization signal motif is present at residues 63-66; sequence TRKR. Serine 71 is modified (phosphoserine). A coiled-coil region spans residues 82-112; the sequence is RDGFMVLLSKIEISSEKTMEIMKNLSSIQAL. The LXXIL motif motif lies at 171–175; that stretch reads LKAIL.

Homodimer; mediated by the coiled coil domain. Interacts with CCNA2 and MTA1. Interacts with NFKB1 NF-kappa-B subunit. Component of the CENPA-CAD complex, composed of CENPI, CENPK, CENPL, CENPO, CENPP, CENPQ, CENPR and CENPS. The CENPA-CAD complex interacts with the CENPA-NAC complex, at least composed of CENPA, CENPC, CENPH, CENPM, CENPN, CENPT and CENPU. Interacts with TASOR. Expressed in the spermatogonia and spermatocytes.

Its subcellular location is the nucleus. It localises to the chromosome. The protein resides in the centromere. It is found in the kinetochore. Functionally, transcription coregulator that can have both coactivator and corepressor functions. Involved in the coactivation of nuclear receptors for retinoid X (RXRs) and thyroid hormone (TRs) in a ligand-dependent fashion. In contrast, it does not coactivate nuclear receptors for retinoic acid, vitamin D, progesterone receptor, nor glucocorticoid. Acts as a coactivator for estrogen receptor alpha. Acts as a transcriptional corepressor via its interaction with the NFKB1 NF-kappa-B subunit, possibly by interfering with the transactivation domain of NFKB1. Induces apoptosis in breast cancer cells, but not in other cancer cells, via a caspase-2 mediated pathway that involves mitochondrial membrane permeabilization but does not require other caspases. May also act as an inhibitor of cyclin A-associated kinase. Also acts a component of the CENPA-CAD (nucleosome distal) complex, a complex recruited to centromeres which is involved in assembly of kinetochore proteins, mitotic progression and chromosome segregation. May be involved in incorporation of newly synthesized CENPA into centromeres via its interaction with the CENPA-NAC complex. The chain is Centromere protein R (Itgb3bp) from Mus musculus (Mouse).